A 161-amino-acid polypeptide reads, in one-letter code: Cyclic pyranopterin monophosphate synthase (161 aa).

Residues methionine 75–histidine 77 and methionine 115–glutamate 116 each bind substrate. Aspartate 130 is an active-site residue.

Belongs to the MoaC family. In terms of assembly, homohexamer; trimer of dimers.

The catalysed reaction is (8S)-3',8-cyclo-7,8-dihydroguanosine 5'-triphosphate = cyclic pyranopterin phosphate + diphosphate. The protein operates within cofactor biosynthesis; molybdopterin biosynthesis. Its function is as follows. Catalyzes the conversion of (8S)-3',8-cyclo-7,8-dihydroguanosine 5'-triphosphate to cyclic pyranopterin monophosphate (cPMP). The chain is Cyclic pyranopterin monophosphate synthase from Bacillus thuringiensis subsp. konkukian (strain 97-27).